A 156-amino-acid chain; its full sequence is Small ribosomal subunit protein uS7 (156 aa).

It belongs to the universal ribosomal protein uS7 family. As to quaternary structure, part of the 30S ribosomal subunit. Contacts proteins S9 and S11.

One of the primary rRNA binding proteins, it binds directly to 16S rRNA where it nucleates assembly of the head domain of the 30S subunit. Is located at the subunit interface close to the decoding center, probably blocks exit of the E-site tRNA. The polypeptide is Small ribosomal subunit protein uS7 (Oceanobacillus iheyensis (strain DSM 14371 / CIP 107618 / JCM 11309 / KCTC 3954 / HTE831)).